The primary structure comprises 63 residues: Arabinogalactan protein 22 (63 aa).

A signal peptide spans 1 to 27 (MASLKFPLEILAVFVIISVILLPIAQS). 3 positions are modified to 4-hydroxyproline: proline 32, proline 34, and proline 36. Proline 32, proline 34, and proline 36 each carry an O-linked (Ara...) hydroxyproline glycan. Serine 38 is lipidated: GPI-anchor amidated serine. Residues 39–63 (DGTSIDQGIAYVLMMVALALTYFIH) constitute a propeptide, removed in mature form.

It belongs to the AG-peptide AGP family. Contains 4-hydroxyproline; hydroxylated on Pro-32, Pro-34 and Pro-36. In terms of processing, O-glycosylated on hydroxyprolines; noncontiguous hydroxylproline residues are glycosylated with arabinogalactan.

The protein resides in the cell membrane. In terms of biological role, proteoglycan that seems to be implicated in diverse developmental roles such as differentiation, cell-cell recognition, embryogenesis and programmed cell death. This Arabidopsis thaliana (Mouse-ear cress) protein is Arabinogalactan protein 22.